We begin with the raw amino-acid sequence, 336 residues long: UPF0284 protein PYRAB00380 (336 aa).

This sequence belongs to the UPF0284 family.

The polypeptide is UPF0284 protein PYRAB00380 (Pyrococcus abyssi (strain GE5 / Orsay)).